Here is a 552-residue protein sequence, read N- to C-terminus: MTELSIRPEEIRDALREYVDSFQATSAGREEVGRVVVTGDGIARVEGLPHTMTNELLEFHGGVLGLALNLEVGEIGTVILGESENIEEGQEVRRTGQILSAPVGDGFLGRVVDPLGRPIDGLGEIVAEGSRELELQAPTVVQRQPVKEPLQTGIKAIDAMTAIGRGQRQLIIGDRQTGKTTVAIDAIINQRDNWTSGDPSKQVKCVYVAIGQKKSTIREVVNSLEEAGALAYTTIVAAPADEPAGFKYIAPYTGSAIAQHWMYNGQHALIVFDDLTKQAEAYRAISLLLRRPPGREAYPGDVFYLHSRLLERCAKLSDELGGGSLTGLPIIETKANDISAYIPTNVISITDGQVFLESDLFNQGVRPAINVGTSVSRVGGSAQVKAMKSVAGRLRLDLAQYRELEAFSAFGSDLDKASRDQLARGARLVELLKQPQGQPFPVERQVVSIWAGTTGKLDDVPVADIRRFESEFLDFVGRSYPGVYDAIVTTGKLSDDTIAMLESAVAEFKKQFTLSDGKPLVNEPAPSPLDPGLVRQESIPVHRPAARKDDEG.

Position 173-180 (173-180) interacts with ATP; the sequence is GDRQTGKT. Positions 516-552 are disordered; sequence DGKPLVNEPAPSPLDPGLVRQESIPVHRPAARKDDEG.

It belongs to the ATPase alpha/beta chains family. F-type ATPases have 2 components, CF(1) - the catalytic core - and CF(0) - the membrane proton channel. CF(1) has five subunits: alpha(3), beta(3), gamma(1), delta(1), epsilon(1). CF(0) has three main subunits: a(1), b(2) and c(9-12). The alpha and beta chains form an alternating ring which encloses part of the gamma chain. CF(1) is attached to CF(0) by a central stalk formed by the gamma and epsilon chains, while a peripheral stalk is formed by the delta and b chains.

The protein resides in the cell membrane. It catalyses the reaction ATP + H2O + 4 H(+)(in) = ADP + phosphate + 5 H(+)(out). Its function is as follows. Produces ATP from ADP in the presence of a proton gradient across the membrane. The alpha chain is a regulatory subunit. This is ATP synthase subunit alpha from Frankia casuarinae (strain DSM 45818 / CECT 9043 / HFP020203 / CcI3).